Consider the following 338-residue polypeptide: 1-aminocyclopropane-1-carboxylate deaminase (338 aa).

At lysine 51 the chain carries N6-(pyridoxal phosphate)lysine. Catalysis depends on serine 78, which acts as the Nucleophile.

Belongs to the ACC deaminase/D-cysteine desulfhydrase family. Homotrimer. Requires pyridoxal 5'-phosphate as cofactor.

The catalysed reaction is 1-aminocyclopropane-1-carboxylate + H2O = 2-oxobutanoate + NH4(+). Its function is as follows. Catalyzes a cyclopropane ring-opening reaction, the irreversible conversion of 1-aminocyclopropane-1-carboxylate (ACC) to ammonia and alpha-ketobutyrate. Allows growth on ACC as a nitrogen source. The sequence is that of 1-aminocyclopropane-1-carboxylate deaminase from Burkholderia vietnamiensis (strain G4 / LMG 22486) (Burkholderia cepacia (strain R1808)).